Reading from the N-terminus, the 520-residue chain is Amine oxidase [flavin-containing] B (520 aa).

Ser2 is subject to N-acetylserine. The Cytoplasmic portion of the chain corresponds to 2–489 (SSKCDVVVVG…TFLERHLPSV (488 aa)). N6-acetyllysine is present on Lys52. Residue Cys397 is modified to S-8alpha-FAD cysteine. Residues 490-516 (PGLLRLIGLTAIFSATALGYLAHKRGL) form a helical; Anchor for type IV membrane protein membrane-spanning segment. At 517–520 (LVRV) the chain is on the mitochondrial intermembrane side.

It belongs to the flavin monoamine oxidase family. Monomer, homo- or heterodimer (containing two subunits of similar size). Each subunit contains a covalently bound flavin. Enzymatically active as monomer. FAD serves as cofactor.

It localises to the mitochondrion outer membrane. The enzyme catalyses a secondary aliphatic amine + O2 + H2O = a primary amine + an aldehyde + H2O2. It catalyses the reaction (R)-adrenaline + O2 + H2O = (R)-3,4-dihydroxymandelaldehyde + methylamine + H2O2. The catalysed reaction is a primary methyl amine + O2 + H2O = an aldehyde + H2O2 + NH4(+). It carries out the reaction benzylamine + O2 + H2O = benzaldehyde + H2O2 + NH4(+). The enzyme catalyses dopamine + O2 + H2O = 3,4-dihydroxyphenylacetaldehyde + H2O2 + NH4(+). It catalyses the reaction tyramine + O2 + H2O = (4-hydroxyphenyl)acetaldehyde + H2O2 + NH4(+). The catalysed reaction is (R)-noradrenaline + O2 + H2O = (R)-3,4-dihydroxymandelaldehyde + H2O2 + NH4(+). It carries out the reaction 2-phenylethylamine + O2 + H2O = 2-phenylacetaldehyde + H2O2 + NH4(+). The enzyme catalyses N-acetylputrescine + O2 + H2O = 4-acetamidobutanal + H2O2 + NH4(+). Catalyzes the oxidative deamination of primary and some secondary amines such as neurotransmitters, and exogenous amines including the tertiary amine, neurotoxin 1-methyl-4-phenyl-1,2,3,6-tetrahydropyridine (MPTP), with concomitant reduction of oxygen to hydrogen peroxide and participates in the metabolism of neuroactive and vasoactive amines in the central nervous system and peripheral tissues. Preferentially degrades benzylamine and phenylethylamine. This is Amine oxidase [flavin-containing] B from Sus scrofa (Pig).